We begin with the raw amino-acid sequence, 330 residues long: DNA-directed RNA polymerase subunit alpha (330 aa).

An alpha N-terminal domain (alpha-NTD) region spans residues 1 to 229 (MKNIKFIKPF…DHFNVLVELS (229 aa)). Residues 245-330 (AHNSVLDLEI…HSVEEDKDKH (86 aa)) form an alpha C-terminal domain (alpha-CTD) region.

The protein belongs to the RNA polymerase alpha chain family. As to quaternary structure, homodimer. The RNAP catalytic core consists of 2 alpha, 1 beta, 1 beta' and 1 omega subunit. When a sigma factor is associated with the core the holoenzyme is formed, which can initiate transcription.

The catalysed reaction is RNA(n) + a ribonucleoside 5'-triphosphate = RNA(n+1) + diphosphate. In terms of biological role, DNA-dependent RNA polymerase catalyzes the transcription of DNA into RNA using the four ribonucleoside triphosphates as substrates. In Onion yellows phytoplasma (strain OY-M), this protein is DNA-directed RNA polymerase subunit alpha.